We begin with the raw amino-acid sequence, 133 residues long: Small ribosomal subunit protein uS11 (133 aa).

This sequence belongs to the universal ribosomal protein uS11 family. As to quaternary structure, part of the 30S ribosomal subunit.

In terms of biological role, located on the platform of the 30S subunit. The polypeptide is Small ribosomal subunit protein uS11 (Aeropyrum pernix (strain ATCC 700893 / DSM 11879 / JCM 9820 / NBRC 100138 / K1)).